The primary structure comprises 267 residues: Type III pantothenate kinase (267 aa).

Residue 6–13 (DVRNTHTT) coordinates ATP. Position 109–112 (109–112 (GADR)) interacts with substrate. Asp111 functions as the Proton acceptor in the catalytic mechanism. Residue Asp131 participates in K(+) binding. Ser134 lines the ATP pocket. A substrate-binding site is contributed by Thr186.

This sequence belongs to the type III pantothenate kinase family. Homodimer. NH4(+) is required as a cofactor. Requires K(+) as cofactor.

The protein localises to the cytoplasm. It catalyses the reaction (R)-pantothenate + ATP = (R)-4'-phosphopantothenate + ADP + H(+). It participates in cofactor biosynthesis; coenzyme A biosynthesis; CoA from (R)-pantothenate: step 1/5. Functionally, catalyzes the phosphorylation of pantothenate (Pan), the first step in CoA biosynthesis. This chain is Type III pantothenate kinase, found in Mycobacterium sp. (strain JLS).